We begin with the raw amino-acid sequence, 366 residues long: Flagellar P-ring protein (366 aa).

Residues 1–23 form the signal peptide; the sequence is MRTLKIFALAVSLLSMLAAPVQA.

It belongs to the FlgI family. The basal body constitutes a major portion of the flagellar organelle and consists of four rings (L,P,S, and M) mounted on a central rod.

The protein localises to the periplasm. It localises to the bacterial flagellum basal body. Assembles around the rod to form the L-ring and probably protects the motor/basal body from shearing forces during rotation. In Idiomarina loihiensis (strain ATCC BAA-735 / DSM 15497 / L2-TR), this protein is Flagellar P-ring protein.